The primary structure comprises 238 residues: MRPNDRAVDQIRPIKITRNYTAYAEGSVLVEFGNTKVLCNATVEENVPRWLKGQGKGWVTAEYGMLPRATHTRNRREAASGKQGGRTMEIQRLIARSLRAVVDLKVMGEIMITVDCDVIQADGGTRTASISGASVAMADAINSLLASGKLKKNPMKGHVAAVSVGIVGAQALCDLEYVEDSAADTDMNVVMTEDGKMIEIQGTAEGEPFSHEELMQLLALANKGIADIVEAQKAALAD.

Phosphate is bound by residues Arg86 and 124-126 (GTR).

The protein belongs to the RNase PH family. In terms of assembly, homohexameric ring arranged as a trimer of dimers.

The catalysed reaction is tRNA(n+1) + phosphate = tRNA(n) + a ribonucleoside 5'-diphosphate. In terms of biological role, phosphorolytic 3'-5' exoribonuclease that plays an important role in tRNA 3'-end maturation. Removes nucleotide residues following the 3'-CCA terminus of tRNAs; can also add nucleotides to the ends of RNA molecules by using nucleoside diphosphates as substrates, but this may not be physiologically important. Probably plays a role in initiation of 16S rRNA degradation (leading to ribosome degradation) during starvation. The sequence is that of Ribonuclease PH from Vibrio atlanticus (strain LGP32) (Vibrio splendidus (strain Mel32)).